Reading from the N-terminus, the 261-residue chain is Carnitinyl-CoA dehydratase (261 aa).

The Nucleophile role is filled by E111. The active-site Proton acceptor is the E131.

The protein belongs to the enoyl-CoA hydratase/isomerase family.

The catalysed reaction is (R)-carnitinyl-CoA = crotonobetainyl-CoA + H2O. Its pathway is amine and polyamine metabolism; carnitine metabolism. Its function is as follows. Catalyzes the reversible dehydration of L-carnitinyl-CoA to crotonobetainyl-CoA. This is Carnitinyl-CoA dehydratase from Escherichia coli O157:H7.